Here is a 259-residue protein sequence, read N- to C-terminus: Ribosomal RNA small subunit methyltransferase J (259 aa).

Residues 101–102, 117–118, 153–154, and D176 each bind S-adenosyl-L-methionine; these read RD, ER, and SS.

Belongs to the methyltransferase superfamily. RsmJ family.

It is found in the cytoplasm. The enzyme catalyses guanosine(1516) in 16S rRNA + S-adenosyl-L-methionine = N(2)-methylguanosine(1516) in 16S rRNA + S-adenosyl-L-homocysteine + H(+). Functionally, specifically methylates the guanosine in position 1516 of 16S rRNA. In Vibrio vulnificus (strain CMCP6), this protein is Ribosomal RNA small subunit methyltransferase J.